A 467-amino-acid polypeptide reads, in one-letter code: Putative vacuolar protein sorting-associated protein TDA6 (467 aa).

Residues I8 to L28 traverse the membrane as a helical segment. 3 N-linked (GlcNAc...) asparagine glycosylation sites follow: N61, N124, and N141.

The protein belongs to the VPS62 family.

It localises to the membrane. In terms of biological role, involved in vacuolar protein sorting. The polypeptide is Putative vacuolar protein sorting-associated protein TDA6 (TDA6) (Saccharomyces cerevisiae (strain ATCC 204508 / S288c) (Baker's yeast)).